The sequence spans 560 residues: MPSSSPSMDESRRSAVPPKEPAGRICTVCSDRANGYNFGVLTCESCKAFFRRNASKHKEIKCPFSDSCQITSASRKFCQACRLNKCFAVGMNSEWLNDLKPKSSIVSGKFKRKKPDMKNNLKVEVDDTEEDLENDDEEQISVPKALLEKLINKANEKSKDRCTCKCQCGFYPITQRLTAYEPKDTTAVNSPQDISFSHHLHHSDSFYSSSTSTLSPMSVISCAPSSHDSSGYNTSQLVTQSPTNYTVSPASIPSSITELSPQMPSQYPPMLSPFQFGVMAQMAAPANFLNFPPMPERTWTPIQAVSTVPVTETLPPNLLEQIHSKIDKYIGVLNEDEITLLEELHVQNEPLNAPLIQWHNPKSIDGVFRIIEEALRRIVNMACQLSLFRELHVDDRKNLLKSGFGELLIVRGLMAYDKSDNSWNHSFGVRGKMEVKVEVLKNPKLEEHYKAHMNLLSTFGEDVRNNEHLMLIFNAAVIFHPHVSNLRDSKRVHSTQAKYFQMLLKLLTFEYGKSRADIAYSNLLNQVVELHRVNRTLLRVFYGLDIAQLDPLIRELCSFE.

Residues 1 to 21 (MPSSSPSMDESRRSAVPPKEP) form a disordered region. A DNA-binding region (nuclear receptor) is located at residues 23-98 (GRICTVCSDR…VGMNSEWLND (76 aa)). 2 NR C4-type zinc fingers span residues 26-46 (CTVC…CESC) and 62-86 (CPFS…LNKC). An NR LBD domain is found at 336–560 (DEITLLEELH…PLIRELCSFE (225 aa)).

It belongs to the nuclear hormone receptor family.

The protein resides in the nucleus. Its function is as follows. Orphan nuclear receptor. This is Nuclear hormone receptor family member nhr-8 (nhr-8) from Caenorhabditis elegans.